Consider the following 227-residue polypeptide: Pro-thyrotropin-releasing hormone-A (227 aa).

A signal peptide spans 1–15 (MVSVWWLLLLGTTVS). At Gln-75 the chain carries Pyrrolidone carboxylic acid. At Pro-77 the chain carries Proline amide. At Gln-89 the chain carries Pyrrolidone carboxylic acid. At Pro-91 the chain carries Proline amide. A Pyrrolidone carboxylic acid modification is found at Gln-107. Disordered stretches follow at residues 107 to 128 (QHPG…KREE) and 151 to 204 (RRQH…PCEG). The residue at position 109 (Pro-109) is a Proline amide. The segment covering 112-128 (RFVDDVEKRQHPGKREE) has biased composition (basic and acidic residues). Gln-121 carries the pyrrolidone carboxylic acid modification. Pro-123 is subject to Proline amide. Position 153 is a pyrrolidone carboxylic acid (Gln-153). At Pro-155 the chain carries Proline amide. Gln-168 carries the pyrrolidone carboxylic acid modification. Pro-170 is modified (proline amide). Residues 184-201 (ENSKEVGKRQHPGKRYDP) show a composition bias toward basic and acidic residues. Position 193 is a pyrrolidone carboxylic acid (Gln-193). Residue Pro-195 is modified to Proline amide.

It belongs to the TRH family.

It is found in the secreted. This chain is Pro-thyrotropin-releasing hormone-A (trh-a), found in Xenopus laevis (African clawed frog).